The sequence spans 321 residues: Anthranilate phosphoribosyltransferase (321 aa).

Residues Gly-72, 75 to 76 (GD), Thr-80, 82 to 85 (NVST), 99 to 107 (KHGNVSITS), and Ser-111 each bind 5-phospho-alpha-D-ribose 1-diphosphate. Residue Gly-72 participates in anthranilate binding. Ser-84 serves as a coordination point for Mg(2+). Asn-102 serves as a coordination point for anthranilate. Arg-157 is an anthranilate binding site. Mg(2+)-binding residues include Asp-216 and Glu-217.

The protein belongs to the anthranilate phosphoribosyltransferase family. Homodimer. Requires Mg(2+) as cofactor.

The enzyme catalyses N-(5-phospho-beta-D-ribosyl)anthranilate + diphosphate = 5-phospho-alpha-D-ribose 1-diphosphate + anthranilate. The protein operates within amino-acid biosynthesis; L-tryptophan biosynthesis; L-tryptophan from chorismate: step 2/5. Its function is as follows. Catalyzes the transfer of the phosphoribosyl group of 5-phosphorylribose-1-pyrophosphate (PRPP) to anthranilate to yield N-(5'-phosphoribosyl)-anthranilate (PRA). The polypeptide is Anthranilate phosphoribosyltransferase (Methanococcus maripaludis (strain DSM 14266 / JCM 13030 / NBRC 101832 / S2 / LL)).